The chain runs to 103 residues: Putative ribosomal RNA-processing protein 7 homolog B (103 aa).

A compositionally biased stretch (basic and acidic residues) spans Met1–Glu19. The interval Met1–Glu25 is disordered. Residues Glu71–Phe100 are a coiled coil.

It belongs to the RRP7 family.

The sequence is that of Putative ribosomal RNA-processing protein 7 homolog B from Homo sapiens (Human).